We begin with the raw amino-acid sequence, 233 residues long: Purine nucleoside phosphorylase DeoD-type (233 aa).

His4 is a binding site for a purine D-ribonucleoside. Phosphate is bound by residues Gly20, Arg24, Arg43, and 87 to 90 (RIGT). Residues 179 to 181 (EME) and 203 to 204 (SD) contribute to the a purine D-ribonucleoside site. Asp204 (proton donor) is an active-site residue.

It belongs to the PNP/UDP phosphorylase family. As to quaternary structure, homohexamer; trimer of homodimers.

It catalyses the reaction a purine D-ribonucleoside + phosphate = a purine nucleobase + alpha-D-ribose 1-phosphate. It carries out the reaction a purine 2'-deoxy-D-ribonucleoside + phosphate = a purine nucleobase + 2-deoxy-alpha-D-ribose 1-phosphate. In terms of biological role, catalyzes the reversible phosphorolytic breakdown of the N-glycosidic bond in the beta-(deoxy)ribonucleoside molecules, with the formation of the corresponding free purine bases and pentose-1-phosphate. In Helicobacter pylori (strain J99 / ATCC 700824) (Campylobacter pylori J99), this protein is Purine nucleoside phosphorylase DeoD-type.